Reading from the N-terminus, the 805-residue chain is Probable inorganic carbon transporter subunit DabA (805 aa).

Residues Cys334, Asp336, His491, and Cys506 each contribute to the Zn(2+) site.

This sequence belongs to the inorganic carbon transporter (TC 9.A.2) DabA family. As to quaternary structure, forms a complex with DabB. Zn(2+) serves as cofactor.

It localises to the cell inner membrane. Part of an energy-coupled inorganic carbon pump. In Ruegeria sp. (strain TM1040) (Silicibacter sp.), this protein is Probable inorganic carbon transporter subunit DabA.